A 712-amino-acid polypeptide reads, in one-letter code: Polyribonucleotide nucleotidyltransferase (712 aa).

Mg(2+) contacts are provided by D485 and D491. Positions 552–615 constitute a KH domain; sequence PRIHTIKINP…EAIRRIEAIT (64 aa). The S1 motif domain occupies 621–689; that stretch reads NRIYEGKVVR…RQGRVRLSIK (69 aa).

This sequence belongs to the polyribonucleotide nucleotidyltransferase family. As to quaternary structure, component of the RNA degradosome, which is a multiprotein complex involved in RNA processing and mRNA degradation. The cofactor is Mg(2+).

It localises to the cytoplasm. It catalyses the reaction RNA(n+1) + phosphate = RNA(n) + a ribonucleoside 5'-diphosphate. Its function is as follows. Involved in mRNA degradation. Catalyzes the phosphorolysis of single-stranded polyribonucleotides processively in the 3'- to 5'-direction. This Aeromonas hydrophila subsp. hydrophila (strain ATCC 7966 / DSM 30187 / BCRC 13018 / CCUG 14551 / JCM 1027 / KCTC 2358 / NCIMB 9240 / NCTC 8049) protein is Polyribonucleotide nucleotidyltransferase.